The sequence spans 498 residues: COP9 signalosome complex subunit 1 (498 aa).

Residues 249–430 (SYLEAANSFI…HVLVSTQGDK (182 aa)) form the PCI domain.

This sequence belongs to the CSN1 family. As to quaternary structure, component of the COP9 signalosome (CSN) complex.

Its subcellular location is the cytoplasm. It localises to the nucleus. Functionally, component of the COP9 signalosome (CSN) complex that acts as an regulator of the ubiquitin (Ubl) conjugation pathway by mediating the deneddylation of the cullin subunit of SCF-type E3 ubiquitin-protein ligase complexes. The CSN complex seems to link protein degradation to sexual development. Required for fruit body formation. The polypeptide is COP9 signalosome complex subunit 1 (csnA) (Emericella nidulans (strain FGSC A4 / ATCC 38163 / CBS 112.46 / NRRL 194 / M139) (Aspergillus nidulans)).